A 459-amino-acid polypeptide reads, in one-letter code: tRNA modification GTPase MnmE (459 aa).

3 residues coordinate (6S)-5-formyl-5,6,7,8-tetrahydrofolate: R20, E85, and R124. In terms of domain architecture, TrmE-type G spans 221-380; the sequence is GLSTVIIGRP…LEEAIQSLFY (160 aa). N231 contacts K(+). GTP is bound by residues 231–236, 250–256, and 275–278; these read NVGKSS, TDIPGTT, and DTAG. S235 is a binding site for Mg(2+). Residues T250, I252, and T255 each coordinate K(+). Residue T256 participates in Mg(2+) binding. K459 serves as a coordination point for (6S)-5-formyl-5,6,7,8-tetrahydrofolate.

Belongs to the TRAFAC class TrmE-Era-EngA-EngB-Septin-like GTPase superfamily. TrmE GTPase family. In terms of assembly, homodimer. Heterotetramer of two MnmE and two MnmG subunits. It depends on K(+) as a cofactor.

Its subcellular location is the cytoplasm. In terms of biological role, exhibits a very high intrinsic GTPase hydrolysis rate. Involved in the addition of a carboxymethylaminomethyl (cmnm) group at the wobble position (U34) of certain tRNAs, forming tRNA-cmnm(5)s(2)U34. This chain is tRNA modification GTPase MnmE, found in Bacillus velezensis (strain DSM 23117 / BGSC 10A6 / LMG 26770 / FZB42) (Bacillus amyloliquefaciens subsp. plantarum).